A 112-amino-acid chain; its full sequence is Large ribosomal subunit protein eL30z (112 aa).

It belongs to the eukaryotic ribosomal protein eL30 family.

The polypeptide is Large ribosomal subunit protein eL30z (RPL30A) (Arabidopsis thaliana (Mouse-ear cress)).